The sequence spans 507 residues: Cytochrome P450 4X1 (507 aa).

The helical transmembrane segment at 14-34 (LHLALVFCLALVLMQAMKLYL) threads the bilayer. Cysteine 452 is a heme binding site.

This sequence belongs to the cytochrome P450 family. Heme serves as cofactor. Expressed in brain and aorta. In the brain, expressed in the Purkinje cells of the cerebellum, pyramidal neurons in the dentate gyrus of the hippocampus, cortical forebrain neurons and those of brain stem nuclei (at protein level). In addition to neurons, also expressed in cerebral vascular endothelial cells (at protein level). Also expressed in epithelial cells of the choroid plexus (at protein level). Hardly detectable in heart, lung, kidney and spleen.

The protein localises to the endoplasmic reticulum membrane. Its subcellular location is the microsome membrane. It catalyses the reaction N-(5Z,8Z,11Z,14Z-eicosatetraenoyl)-ethanolamine + reduced [NADPH--hemoprotein reductase] + O2 = N-(14,15-epoxy-5Z,8Z,11Z-eicosatrienoyl)-ethanolamine + oxidized [NADPH--hemoprotein reductase] + H2O + H(+). In terms of biological role, a cytochrome P450 monooxygenase that selectively catalyzes the epoxidation of the last double bond of the arachidonoyl moiety of anandamide, potentially modulating endocannabinoid signaling. Has no hydroxylase activity toward various fatty acids, steroids and prostaglandins. Mechanistically, uses molecular oxygen inserting one oxygen atom into a substrate, and reducing the second into a water molecule, with two electrons provided by NADPH via cytochrome P450 reductase (CPR; NADPH-ferrihemoprotein reductase). This chain is Cytochrome P450 4X1, found in Mus musculus (Mouse).